Consider the following 147-residue polypeptide: Large ribosomal subunit protein uL15 (147 aa).

The disordered stretch occupies residues 1–62 (MDLSNLRPAI…GQMPLQRRLP (62 aa)). Gly residues-rich tracts occupy residues 21-31 (RGPGSGNGKTA) and 42-52 (SGGGVKPGFEG).

The protein belongs to the universal ribosomal protein uL15 family. In terms of assembly, part of the 50S ribosomal subunit.

Functionally, binds to the 23S rRNA. This chain is Large ribosomal subunit protein uL15, found in Syntrophotalea carbinolica (strain DSM 2380 / NBRC 103641 / GraBd1) (Pelobacter carbinolicus).